A 419-amino-acid chain; its full sequence is DNA-directed RNA polymerase I subunit RPA49 (419 aa).

Phosphoserine is present on residues Ser35 and Ser163. The residue at position 373 (Lys373) is an N6-acetyllysine. The disordered stretch occupies residues 397–419; the sequence is GTLSLPLPPAQTSDRLAKRRKIT.

It belongs to the eukaryotic RPA49/POLR1E RNA polymerase subunit family. As to quaternary structure, component of the RNA polymerase I (Pol I) complex consisting of 13 subunits: a ten-subunit catalytic core composed of POLR1A/RPA1, POLR1B/RPA2, POLR1C/RPAC1, POLR1D/RPAC2, POLR1H/RPA12, POLR2E/RPABC1, POLR2F/RPABC2, POLR2H/RPABC3, POLR2K/RPABC4 and POLR2L/RPABC5; a mobile stalk subunit POLR1F/RPA43 protruding from the core and additional subunits homologous to general transcription factors POLR1E/RPA49 and POLR1G/RPA34. Forms a heterodimer with POLR1G/RPA34. Interacts with POLR1G. Also binds UBTF/UBF. Interacts with PWP1. In terms of processing, acetylated at Lys-373 by CREBBP/CBP, leading to decreased RNA polymerase I transcription. In normal conditions, deacetylated by SIRT7, promoting the association of RNA polymerase I with the rDNA promoter region and coding region. In response to stress, SIRT7 is released from nucleoli leading to hyperacetylation of POLR1E/PAF53 and decreased association of RNA polymerase I with the rDNA promoter region.

The protein localises to the nucleus. It localises to the nucleolus. Functionally, component of RNA polymerase I (Pol I), a DNA-dependent RNA polymerase which synthesizes ribosomal RNA precursors using the four ribonucleoside triphosphates as substrates. Appears to be involved in the formation of the initiation complex at the promoter by mediating the interaction between Pol I and UBTF/UBF. The polypeptide is DNA-directed RNA polymerase I subunit RPA49 (POLR1E) (Homo sapiens (Human)).